Consider the following 542-residue polypeptide: Major facilitator superfamily transporter mfsA (542 aa).

11 helical membrane-spanning segments follow: residues 19-39 (FAAV…AGLL), 70-90 (GAVT…SMFC), 99-119 (LIFM…VCYT), 127-149 (FVIG…PVWQ), 160-180 (FLVC…YWVV), 194-214 (FPVA…LMLP), 321-341 (IMGG…FFMI), 349-369 (LYLI…ACLI), 380-400 (AVGI…LPWI), 413-432 (VGAS…VVMF), and 444-464 (VYLF…FFYV).

It belongs to the major facilitator superfamily. Sugar transporter (TC 2.A.1.1) family.

It is found in the membrane. Its function is as follows. Major facilitator superfamily transporter that may be involved in A.fumigatus adaptation to azoles such as vorizonazole. This Aspergillus fumigatus (strain ATCC MYA-4609 / CBS 101355 / FGSC A1100 / Af293) (Neosartorya fumigata) protein is Major facilitator superfamily transporter mfsA.